The chain runs to 216 residues: Inorganic pyrophosphatase (216 aa).

The substrate site is built by Lys39, Arg53, and Tyr65. 3 residues coordinate Mg(2+): Asp93, Asp98, and Asp131. Residue Tyr168 coordinates substrate.

Belongs to the PPase family. In terms of assembly, homohexamer. It depends on Mg(2+) as a cofactor.

Its subcellular location is the cytoplasm. It carries out the reaction diphosphate + H2O = 2 phosphate + H(+). Its function is as follows. Catalyzes the hydrolysis of inorganic pyrophosphate (PPi) forming two phosphate ions. The sequence is that of Inorganic pyrophosphatase from Chlamydia caviae (strain ATCC VR-813 / DSM 19441 / 03DC25 / GPIC) (Chlamydophila caviae).